The sequence spans 447 residues: Coagulation factor VII (447 aa).

The signal sequence occupies residues 1–23 (MLSQAWALALLCFLLSLWGSLPA). The propeptide occupies 24-40 (VFLPQEQALSILHRPRR). The Gla domain occupies 41–85 (ANGFLEELLPGSLERECREELCSFEEAHEIFRNEERTRQFWVSYN). 4-carboxyglutamate is present on residues E46, E47, E54, E56, E59, E60, E65, E66, E69, E74, and E75. C57 and C62 form a disulfide bridge. Residues 86–122 (DGDQCASSPCQNGGSCEDQLRSYICFCPDGFEGRNCE) form the EGF-like 1; calcium-binding domain. 10 disulfides stabilise this stretch: C90/C101, C95/C110, C112/C121, C131/C142, C138/C152, C154/C167, C175/C302, C199/C204, C218/C234, and C350/C369. The O-linked (Glc...) serine glycan is linked to S92. O-linked (Glc...) serine; alternate glycosylation is present at S92. S92 is a glycosylation site (O-linked (Xyl...) serine; alternate). O-linked (Fuc) serine glycosylation occurs at S100. An EGF-like 2 domain is found at 127-168 (SQLICANDNGGCEQYCGADPGAGRFCWCHEGYALQADGVSCA). A glycan (N-linked (GlcNAc...) asparagine) is linked at N185. The Peptidase S1 domain maps to 193-432 (IVGGHVCPKG…YTAWLRQLMG (240 aa)). H233 (charge relay system) is an active-site residue. A glycan (N-linked (GlcNAc...) asparagine) is linked at N243. D282 functions as the Charge relay system in the catalytic mechanism. D378 is a substrate binding site. An intrachain disulfide couples C380 to C408. S384 (charge relay system) is an active-site residue.

Belongs to the peptidase S1 family. As to quaternary structure, heterodimer of a light chain and a heavy chain linked by a disulfide bond. The vitamin K-dependent, enzymatic carboxylation of some glutamate residues allows the modified protein to bind calcium. In terms of processing, O-glycosylated. O-fucosylated by POFUT1 on a conserved serine or threonine residue found in the consensus sequence C2-X(4,5)-[S/T]-C3 of EGF domains, where C2 and C3 are the second and third conserved cysteines. Post-translationally, can be either O-glucosylated or O-xylosylated at Ser-92 by POGLUT1. In terms of tissue distribution, plasma.

The protein resides in the secreted. It catalyses the reaction Selective cleavage of Arg-|-Ile bond in factor X to form factor Xa.. In terms of biological role, initiates the extrinsic pathway of blood coagulation. Serine protease that circulates in the blood in a zymogen form. Factor VII is converted to factor VIIa by factor Xa, factor XIIa, factor IXa, or thrombin by minor proteolysis. In the presence of tissue factor and calcium ions, factor VIIa then converts factor X to factor Xa by limited proteolysis. Factor VIIa also converts factor IX to factor IXa in the presence of tissue factor and calcium. In Bos taurus (Bovine), this protein is Coagulation factor VII (F7).